The following is a 93-amino-acid chain: Small ribosomal subunit protein uS19 (93 aa).

Positions 74–93 are disordered; the sequence is FSPTRTFRGHVKDDRKSKRR. A compositionally biased stretch (basic and acidic residues) spans 83 to 93; it reads HVKDDRKSKRR.

This sequence belongs to the universal ribosomal protein uS19 family.

Functionally, protein S19 forms a complex with S13 that binds strongly to the 16S ribosomal RNA. This is Small ribosomal subunit protein uS19 from Streptomyces griseus subsp. griseus (strain JCM 4626 / CBS 651.72 / NBRC 13350 / KCC S-0626 / ISP 5235).